Here is a 650-residue protein sequence, read N- to C-terminus: Fructose-1,6-bisphosphatase class 3 (650 aa).

It belongs to the FBPase class 3 family. Requires Mn(2+) as cofactor.

The enzyme catalyses beta-D-fructose 1,6-bisphosphate + H2O = beta-D-fructose 6-phosphate + phosphate. It participates in carbohydrate biosynthesis; gluconeogenesis. The chain is Fructose-1,6-bisphosphatase class 3 from Staphylococcus xylosus.